The following is a 201-amino-acid chain: L(+)-tartrate dehydratase subunit beta (201 aa).

His-37 is a catalytic residue.

This sequence belongs to the class-I fumarase family. As to quaternary structure, heterotetramer of two alpha and two beta subunits.

It carries out the reaction (2R,3R)-tartrate = oxaloacetate + H2O. The chain is L(+)-tartrate dehydratase subunit beta (ttdB) from Shigella sonnei (strain Ss046).